Here is a 346-residue protein sequence, read N- to C-terminus: 2,5-dichlorohydroquinone reductive dechlorinase (346 aa).

In terms of domain architecture, GST N-terminal spans 43-154 (PRFELFHFVF…YLCDALSGGT (112 aa)). The GST C-terminal domain maps to 189–335 (DRRPESMQAV…AIIQWPGHPP (147 aa)).

It belongs to the GST superfamily.

It catalyses the reaction 2,5-dichlorohydroquinone + 2 glutathione = chlorohydroquinone + glutathione disulfide + chloride + H(+). The enzyme catalyses chlorohydroquinone + 2 glutathione = hydroquinone + glutathione disulfide + chloride + H(+). The protein operates within xenobiotic degradation; gamma-hexachlorocyclohexane degradation. Functionally, catalyzes the degradation of 2,5-dichlorohydroquinone (2,5-DCHQ) into hydroquinone (HQ) via chlorohydroquinone (CHQ). The chain is 2,5-dichlorohydroquinone reductive dechlorinase from Sphingobium indicum (strain DSM 16412 / CCM 7286 / MTCC 6364 / B90A).